Here is a 389-residue protein sequence, read N- to C-terminus: MEAAAAAAAEEEAGNPDGVEGAAVAAVAPEAAAEGPSEPNAGEASREPDAGQASREPGAAGPSREPDVAGPSREPDAAGPSREPGAAGGSREPGAAGGSRQPVPDAAQLAVVPYVEDIDRYLRSLEAEQTRRPMINYVQEIQGGIINMDVRGILVDWMADVAYVFNLQEETLHHAVSYVDRFLSKIAFPGDKLKLLGTTALFVASKYEEIHPPHVRNFSAVTVNTYTTQQVSKMELDILRFLNFDVGSPTVITFLRKFLTSCCGGNNSSNRKLELMCNYLAELSLLDDYYIRFLPSIVAAACLFVGKFTLNPNTRPWFGSVSTITPPENIKGGVEKYMVSRIYMCVFDLPMLFLMETWSSSGVSNHTKLQLKQNMMELPIENPTFISAS.

The interval 1 to 103 (MEAAAAAAAE…GAAGGSRQPV (103 aa)) is disordered. Residues 19–43 (VEGAAVAAVAPEAAAEGPSEPNAGE) are compositionally biased toward low complexity.

The protein belongs to the cyclin family. Cyclin F subfamily.

The sequence is that of Putative cyclin-F3-1 (CYCF3-1) from Oryza sativa subsp. japonica (Rice).